We begin with the raw amino-acid sequence, 935 residues long: Isoleucine--tRNA ligase (935 aa).

The 'HIGH' region motif lies at 58-68 (PYANGSIHVGH). Position 558 (Glu-558) interacts with L-isoleucyl-5'-AMP. The 'KMSKS' region motif lies at 599 to 603 (KMSKS). Lys-602 serves as a coordination point for ATP. 4 residues coordinate Zn(2+): Cys-897, Cys-900, Cys-917, and Cys-920.

The protein belongs to the class-I aminoacyl-tRNA synthetase family. IleS type 1 subfamily. Monomer. It depends on Zn(2+) as a cofactor.

It is found in the cytoplasm. The enzyme catalyses tRNA(Ile) + L-isoleucine + ATP = L-isoleucyl-tRNA(Ile) + AMP + diphosphate. In terms of biological role, catalyzes the attachment of isoleucine to tRNA(Ile). As IleRS can inadvertently accommodate and process structurally similar amino acids such as valine, to avoid such errors it has two additional distinct tRNA(Ile)-dependent editing activities. One activity is designated as 'pretransfer' editing and involves the hydrolysis of activated Val-AMP. The other activity is designated 'posttransfer' editing and involves deacylation of mischarged Val-tRNA(Ile). The chain is Isoleucine--tRNA ligase from Francisella tularensis subsp. holarctica (strain OSU18).